The primary structure comprises 339 residues: Ketol-acid reductoisomerase (NADP(+)) (339 aa).

The KARI N-terminal Rossmann domain maps to Met-1 to Thr-182. NADP(+) is bound by residues Tyr-24 to Gln-27, Arg-48, Ser-51, Ser-53, and Asp-83 to Gln-86. His-108 is an active-site residue. Position 134 (Gly-134) interacts with NADP(+). A KARI C-terminal knotted domain is found at Thr-183–Ile-328. Mg(2+)-binding residues include Asp-191, Glu-195, Glu-227, and Glu-231. Substrate is bound at residue Ser-252.

The protein belongs to the ketol-acid reductoisomerase family. Mg(2+) serves as cofactor.

It carries out the reaction (2R)-2,3-dihydroxy-3-methylbutanoate + NADP(+) = (2S)-2-acetolactate + NADPH + H(+). The enzyme catalyses (2R,3R)-2,3-dihydroxy-3-methylpentanoate + NADP(+) = (S)-2-ethyl-2-hydroxy-3-oxobutanoate + NADPH + H(+). It functions in the pathway amino-acid biosynthesis; L-isoleucine biosynthesis; L-isoleucine from 2-oxobutanoate: step 2/4. Its pathway is amino-acid biosynthesis; L-valine biosynthesis; L-valine from pyruvate: step 2/4. Involved in the biosynthesis of branched-chain amino acids (BCAA). Catalyzes an alkyl-migration followed by a ketol-acid reduction of (S)-2-acetolactate (S2AL) to yield (R)-2,3-dihydroxy-isovalerate. In the isomerase reaction, S2AL is rearranged via a Mg-dependent methyl migration to produce 3-hydroxy-3-methyl-2-ketobutyrate (HMKB). In the reductase reaction, this 2-ketoacid undergoes a metal-dependent reduction by NADPH to yield (R)-2,3-dihydroxy-isovalerate. This Bradyrhizobium sp. (strain ORS 278) protein is Ketol-acid reductoisomerase (NADP(+)).